A 502-amino-acid chain; its full sequence is Pyruvate kinase (502 aa).

Arg54 is a binding site for substrate. K(+) contacts are provided by Asn56, Ser58, Asp88, and Thr89. 56-59 provides a ligand contact to ATP; that stretch reads NFSH. Residues Arg95 and Lys184 each contribute to the ATP site. A Mg(2+)-binding site is contributed by Glu252. Substrate-binding residues include Gly275, Asp276, and Thr308. Mg(2+) is bound at residue Asp276.

Belongs to the pyruvate kinase family. In terms of assembly, homotetramer. Requires Mg(2+) as cofactor. K(+) is required as a cofactor.

The enzyme catalyses pyruvate + ATP = phosphoenolpyruvate + ADP + H(+). It functions in the pathway carbohydrate degradation; glycolysis; pyruvate from D-glyceraldehyde 3-phosphate: step 5/5. With respect to regulation, regulated by phosphoenolpyruvate substrate and is allosterically activated by ribose-5-phosphate, AMP and other nucleoside monophosphates but not by fructose-1,6-bisphosphate. In Lactococcus lactis subsp. lactis (strain IL1403) (Streptococcus lactis), this protein is Pyruvate kinase (pyk).